We begin with the raw amino-acid sequence, 186 residues long: Inosine/xanthosine triphosphatase (186 aa).

Gln-75 is a Mg(2+) binding site.

Belongs to the YjjX NTPase family. In terms of assembly, homodimer. Mg(2+) is required as a cofactor. Requires Mn(2+) as cofactor.

It catalyses the reaction XTP + H2O = XDP + phosphate + H(+). It carries out the reaction ITP + H2O = IDP + phosphate + H(+). Its function is as follows. Phosphatase that hydrolyzes non-canonical purine nucleotides such as XTP and ITP to their respective diphosphate derivatives. Probably excludes non-canonical purines from DNA/RNA precursor pool, thus preventing their incorporation into DNA/RNA and avoiding chromosomal lesions. This is Inosine/xanthosine triphosphatase from Shewanella baltica (strain OS195).